The following is a 211-amino-acid chain: Protein-L-isoaspartate O-methyltransferase (211 aa).

The active site involves S60.

It belongs to the methyltransferase superfamily. L-isoaspartyl/D-aspartyl protein methyltransferase family.

It is found in the cytoplasm. The enzyme catalyses [protein]-L-isoaspartate + S-adenosyl-L-methionine = [protein]-L-isoaspartate alpha-methyl ester + S-adenosyl-L-homocysteine. Functionally, catalyzes the methyl esterification of L-isoaspartyl residues in peptides and proteins that result from spontaneous decomposition of normal L-aspartyl and L-asparaginyl residues. It plays a role in the repair and/or degradation of damaged proteins. The polypeptide is Protein-L-isoaspartate O-methyltransferase (Pseudomonas syringae pv. tomato (strain ATCC BAA-871 / DC3000)).